Reading from the N-terminus, the 232-residue chain is Putative membrane protein ORF8 (232 aa).

Positions 71 to 84 (GSSAASIPSAPTPD) are enriched in low complexity. Residues 71-121 (GSSAASIPSAPTPDATRESPTGEPHRDRALSTETPTPEPSRDGGSTPEVLH) form a disordered region. Helical transmembrane passes span 166–182 (VFARALAAAEIAIGSVA) and 195–211 (LVVTSLVFAGVALWVIV).

It localises to the membrane. The polypeptide is Putative membrane protein ORF8 (ORF8) (Ictalurid herpesvirus 1 (strain Auburn) (IcHV-1)).